We begin with the raw amino-acid sequence, 1345 residues long: Mediator of RNA polymerase II transcription subunit 13 (1345 aa).

Disordered stretches follow at residues 363–387 (KSQT…SPYP) and 402–537 (FMAS…AESG). The span at 364–375 (SQTNQQQTSSNS) shows a compositional bias: low complexity. The span at 406-415 (PSVSGNSNEL) shows a compositional bias: polar residues. Over residues 469–482 (LFGEEDEDEDDADL) the composition is skewed to acidic residues. Polar residues predominate over residues 486 to 501 (SNNDSTGESNANNSKG).

Belongs to the Mediator complex subunit 13 family. In terms of assembly, component of the SRB8-11 complex, which itself associates with the Mediator complex.

It localises to the nucleus. Functionally, component of the SRB8-11 complex. The SRB8-11 complex is a regulatory module of the Mediator complex which is itself involved in regulation of basal and activated RNA polymerase II-dependent transcription. The SRB8-11 complex may be involved in the transcriptional repression of a subset of genes regulated by Mediator. It may inhibit the association of the Mediator complex with RNA polymerase II to form the holoenzyme complex. This is Mediator of RNA polymerase II transcription subunit 13 (SSN2) from Candida glabrata (strain ATCC 2001 / BCRC 20586 / JCM 3761 / NBRC 0622 / NRRL Y-65 / CBS 138) (Yeast).